A 390-amino-acid polypeptide reads, in one-letter code: Phosphopentomutase (390 aa).

6 residues coordinate Mn(2+): aspartate 9, aspartate 283, histidine 288, aspartate 324, histidine 325, and histidine 336.

This sequence belongs to the phosphopentomutase family. The cofactor is Mn(2+).

Its subcellular location is the cytoplasm. The enzyme catalyses 2-deoxy-alpha-D-ribose 1-phosphate = 2-deoxy-D-ribose 5-phosphate. The catalysed reaction is alpha-D-ribose 1-phosphate = D-ribose 5-phosphate. It participates in carbohydrate degradation; 2-deoxy-D-ribose 1-phosphate degradation; D-glyceraldehyde 3-phosphate and acetaldehyde from 2-deoxy-alpha-D-ribose 1-phosphate: step 1/2. Isomerase that catalyzes the conversion of deoxy-ribose 1-phosphate (dRib-1-P) and ribose 1-phosphate (Rib-1-P) to deoxy-ribose 5-phosphate (dRib-5-P) and ribose 5-phosphate (Rib-5-P), respectively. The polypeptide is Phosphopentomutase (Thermotoga petrophila (strain ATCC BAA-488 / DSM 13995 / JCM 10881 / RKU-1)).